We begin with the raw amino-acid sequence, 434 residues long: Maltoporin (434 aa).

The signal sequence occupies residues 1–25 (MMTTLRKLPLALAIAAGVLTTQAMA).

It belongs to the porin LamB (TC 1.B.3) family. In terms of assembly, homotrimer formed of three 18-stranded antiparallel beta-barrels, containing three independent channels.

The protein resides in the cell outer membrane. The enzyme catalyses beta-maltose(in) = beta-maltose(out). In terms of biological role, involved in the transport of maltose and maltodextrins. This is Maltoporin from Serratia proteamaculans (strain 568).